The sequence spans 87 residues: U3-theraphotoxin-Hhn1a 7 (87 aa).

Residues 1-24 (MVNMKASMFLTFAGLVLLFVVSYA) form the signal peptide. Residues 25–52 (SESEEKEFPKEMLSSIFAVDNDFKQEER) constitute a propeptide that is removed on maturation. Intrachain disulfides connect Cys54–Cys67, Cys61–Cys72, and Cys66–Cys79.

Belongs to the neurotoxin 10 (Hwtx-1) family. 51 (Hntx-8) subfamily. Hntx-8 sub-subfamily. In terms of tissue distribution, expressed by the venom gland.

It is found in the secreted. Functionally, ion channel inhibitor. This Cyriopagopus hainanus (Chinese bird spider) protein is U3-theraphotoxin-Hhn1a 7.